We begin with the raw amino-acid sequence, 444 residues long: Tubulin beta-8 chain (444 aa).

An MREI motif motif is present at residues 1–4 (MREI). GTP contacts are provided by Gln-11, Glu-69, Ser-138, Gly-142, Thr-143, and Gly-144. Glu-69 provides a ligand contact to Mg(2+). Ser-172 carries the phosphoserine; by CDK1 modification. Positions 204 and 226 each coordinate GTP. The disordered stretch occupies residues 423 to 444 (QQYQDATAEEEEDEEYAEEEVA). The segment covering 429–444 (TAEEEEDEEYAEEEVA) has biased composition (acidic residues). Position 436 is a 5-glutamyl polyglutamate (Glu-436).

This sequence belongs to the tubulin family. Dimer of alpha and beta chains. A typical microtubule is a hollow water-filled tube with an outer diameter of 25 nm and an inner diameter of 15 nM. Alpha-beta heterodimers associate head-to-tail to form protofilaments running lengthwise along the microtubule wall with the beta-tubulin subunit facing the microtubule plus end conferring a structural polarity. Microtubules usually have 13 protofilaments but different protofilament numbers can be found in some organisms and specialized cells. It depends on Mg(2+) as a cofactor. Post-translationally, some glutamate residues at the C-terminus are polyglycylated, resulting in polyglycine chains on the gamma-carboxyl group. Glycylation is mainly limited to tubulin incorporated into axonemes (cilia and flagella) whereas glutamylation is prevalent in neuronal cells, centrioles, axonemes, and the mitotic spindle. Both modifications can coexist on the same protein on adjacent residues, and lowering polyglycylation levels increases polyglutamylation, and reciprocally. Cilia and flagella glycylation is required for their stability and maintenance. Flagella glycylation controls sperm motility. Some glutamate residues at the C-terminus are polyglutamylated, resulting in polyglutamate chains on the gamma-carboxyl group. Polyglutamylation plays a key role in microtubule severing by spastin (SPAST). SPAST preferentially recognizes and acts on microtubules decorated with short polyglutamate tails: severing activity by SPAST increases as the number of glutamates per tubulin rises from one to eight, but decreases beyond this glutamylation threshold. Glutamylation is also involved in cilia motility. In terms of processing, phosphorylated on Ser-172 by CDK1 during the cell cycle, from metaphase to telophase, but not in interphase. This phosphorylation inhibits tubulin incorporation into microtubules.

The protein localises to the cytoplasm. Its subcellular location is the cytoskeleton. It localises to the spindle. Its function is as follows. Tubulin is the major constituent of microtubules, a cylinder consisting of laterally associated linear protofilaments composed of alpha- and beta-tubulin heterodimers. Microtubules grow by the addition of GTP-tubulin dimers to the microtubule end, where a stabilizing cap forms. Below the cap, tubulin dimers are in GDP-bound state, owing to GTPase activity of alpha-tubulin. Has a key role in meiotic spindle assembly and oocyte maturation. In Pan troglodytes (Chimpanzee), this protein is Tubulin beta-8 chain (TUBB8).